We begin with the raw amino-acid sequence, 61 residues long: Large ribosomal subunit protein bL32 (61 aa).

Over residues methionine 1–arginine 16 the composition is skewed to basic residues. A disordered region spans residues methionine 1 to histidine 41. The segment covering valine 28–histidine 41 has biased composition (basic and acidic residues).

Belongs to the bacterial ribosomal protein bL32 family.

The protein is Large ribosomal subunit protein bL32 of Rhizobium rhizogenes (strain K84 / ATCC BAA-868) (Agrobacterium radiobacter).